We begin with the raw amino-acid sequence, 541 residues long: 1'-carboxy-chondrochloren decarboxylase (541 aa).

An FAD-binding PCMH-type domain is found at 39 to 226 (TTHRIPAIIS…TRMTIWLAPR (188 aa)).

It catalyses the reaction 1'-carboxy-chondrochloren A + FAD + 2 H(+) = chondrochloren A + FADH2 + CO2. The enzyme catalyses 1'-carboxy-chondrochloren B + FAD + 2 H(+) = chondrochloren B + FADH2 + CO2. Its pathway is antibiotic biosynthesis. Its activity is regulated as follows. Activity is not affected by the addition of EDTA or/and EGTA chelators or in the presence of external metals like Zn(2+), Mg(2+), Mn(2+) and Fe(2+). Activity is inhibited under low oxygen conditions. In terms of biological role, oxidative decarboxylase involved in the biosynthesis of the antibiotics chondrochloren A and chondrochloren B. Catalyzes the decarboxylation of biologically inactive pre-chondrochloren A and pre-chondrochloren B to yield mature chondrochloren A and chondrochloren B, respectively. Cannot decarboxylate free L-tyrosine, 3-chloro-tyrosine or a number of chlorinated and non-chlorinated analog substrates containing variable N-acyl chains. This chain is 1'-carboxy-chondrochloren decarboxylase, found in Chondromyces crocatus.